Consider the following 570-residue polypeptide: Probable D-xylulose kinase A (570 aa).

Positions 95, 166, 282, and 283 each coordinate substrate. ATP-binding positions include Trp-364, 469–470 (GG), and Asn-473.

This sequence belongs to the FGGY kinase family.

Its subcellular location is the cytoplasm. It catalyses the reaction D-xylulose + ATP = D-xylulose 5-phosphate + ADP + H(+). Its function is as follows. Highly specific D-xylulose kinase which participates in the catabolism of xylose. Xylose is a major component of hemicelluloses such as xylan. Most fungi utilize D-xylose via three enzymatic reactions, xylose reductase (XR), xylitol dehydrogenase (XDH), and xylulokinase, to form xylulose 5-phosphate, which enters pentose phosphate pathway. In Aspergillus niger (strain ATCC MYA-4892 / CBS 513.88 / FGSC A1513), this protein is Probable D-xylulose kinase A (xkiA).